The following is a 124-amino-acid chain: Glycine cleavage system H protein (124 aa).

The Lipoyl-binding domain maps to 22-104 (LVITGITDHA…YGKGWIYKIK (83 aa)). Residue Lys-63 is modified to N6-lipoyllysine.

It belongs to the GcvH family. The glycine cleavage system is composed of four proteins: P, T, L and H. The cofactor is (R)-lipoate.

In terms of biological role, the glycine cleavage system catalyzes the degradation of glycine. The H protein shuttles the methylamine group of glycine from the P protein to the T protein. The polypeptide is Glycine cleavage system H protein (Acinetobacter baumannii (strain SDF)).